The chain runs to 141 residues: Large ribosomal subunit protein uL16 (141 aa).

The interval 1 to 20 (MLMPKRTKYRKQMKGRNRGK) is disordered.

It belongs to the universal ribosomal protein uL16 family. In terms of assembly, part of the 50S ribosomal subunit.

In terms of biological role, binds 23S rRNA and is also seen to make contacts with the A and possibly P site tRNAs. The protein is Large ribosomal subunit protein uL16 of Helicobacter hepaticus (strain ATCC 51449 / 3B1).